The primary structure comprises 94 residues: DNA-directed RNA polymerase subunit omega (94 aa).

It belongs to the RNA polymerase subunit omega family. The RNAP catalytic core consists of 2 alpha, 1 beta, 1 beta' and 1 omega subunit. When a sigma factor is associated with the core the holoenzyme is formed, which can initiate transcription.

It carries out the reaction RNA(n) + a ribonucleoside 5'-triphosphate = RNA(n+1) + diphosphate. Functionally, promotes RNA polymerase assembly. Latches the N- and C-terminal regions of the beta' subunit thereby facilitating its interaction with the beta and alpha subunits. This Shewanella pealeana (strain ATCC 700345 / ANG-SQ1) protein is DNA-directed RNA polymerase subunit omega.